Reading from the N-terminus, the 285-residue chain is 2-dehydro-3-deoxyphosphooctonate aldolase (285 aa).

It belongs to the KdsA family.

It localises to the cytoplasm. It catalyses the reaction D-arabinose 5-phosphate + phosphoenolpyruvate + H2O = 3-deoxy-alpha-D-manno-2-octulosonate-8-phosphate + phosphate. It participates in carbohydrate biosynthesis; 3-deoxy-D-manno-octulosonate biosynthesis; 3-deoxy-D-manno-octulosonate from D-ribulose 5-phosphate: step 2/3. Its pathway is bacterial outer membrane biogenesis; lipopolysaccharide biosynthesis. The polypeptide is 2-dehydro-3-deoxyphosphooctonate aldolase (Leptothrix cholodnii (strain ATCC 51168 / LMG 8142 / SP-6) (Leptothrix discophora (strain SP-6))).